The following is a 375-amino-acid chain: Succinyl-diaminopimelate desuccinylase (375 aa).

His66 lines the Zn(2+) pocket. Residue Asp68 is part of the active site. Position 99 (Asp99) interacts with Zn(2+). Glu133 serves as the catalytic Proton acceptor. Positions 134, 162, and 348 each coordinate Zn(2+).

Belongs to the peptidase M20A family. DapE subfamily. As to quaternary structure, homodimer. Requires Zn(2+) as cofactor. It depends on Co(2+) as a cofactor.

The enzyme catalyses N-succinyl-(2S,6S)-2,6-diaminopimelate + H2O = (2S,6S)-2,6-diaminopimelate + succinate. It functions in the pathway amino-acid biosynthesis; L-lysine biosynthesis via DAP pathway; LL-2,6-diaminopimelate from (S)-tetrahydrodipicolinate (succinylase route): step 3/3. Catalyzes the hydrolysis of N-succinyl-L,L-diaminopimelic acid (SDAP), forming succinate and LL-2,6-diaminopimelate (DAP), an intermediate involved in the bacterial biosynthesis of lysine and meso-diaminopimelic acid, an essential component of bacterial cell walls. This Escherichia coli O157:H7 protein is Succinyl-diaminopimelate desuccinylase.